The sequence spans 199 residues: Thymidine kinase (199 aa).

ATP-binding positions include 15 to 22 (GSMFSGKS) and 88 to 91 (DEVQ). Glutamate 89 serves as the catalytic Proton acceptor. Residues cysteine 145, cysteine 148, cysteine 183, and histidine 186 each coordinate Zn(2+).

It belongs to the thymidine kinase family. In terms of assembly, homotetramer.

The protein localises to the cytoplasm. It carries out the reaction thymidine + ATP = dTMP + ADP + H(+). In Staphylococcus epidermidis (strain ATCC 12228 / FDA PCI 1200), this protein is Thymidine kinase.